The chain runs to 68 residues: Copper transport protein ATOX1 (68 aa).

The HMA domain occupies 1–63 (MPKHEFSVDM…TLGKTGKAVS (63 aa)). Cu cation-binding residues include cysteine 12 and cysteine 15. Serine 47 carries the phosphoserine modification. An N6-acetyllysine modification is found at lysine 60.

Belongs to the ATX1 family. As to quaternary structure, homodimer. Interacts with ATP7B. Interacts with ATP7A. Interacts (via dimer form) with SLC31A1 (via C-terminal domain); this interaction improves ATOX1 stability and controls intracellular Cu(I) levels.

In terms of biological role, binds and deliver cytosolic copper to the copper ATPase proteins. May be important in cellular antioxidant defense. The sequence is that of Copper transport protein ATOX1 from Bos taurus (Bovine).